We begin with the raw amino-acid sequence, 436 residues long: Trigger factor (436 aa).

In terms of domain architecture, PPIase FKBP-type spans 161–246 (DDQLNIDFVG…VNSVAEPKLP (86 aa)).

The protein belongs to the FKBP-type PPIase family. Tig subfamily.

The protein resides in the cytoplasm. The catalysed reaction is [protein]-peptidylproline (omega=180) = [protein]-peptidylproline (omega=0). In terms of biological role, involved in protein export. Acts as a chaperone by maintaining the newly synthesized protein in an open conformation. Functions as a peptidyl-prolyl cis-trans isomerase. This chain is Trigger factor, found in Pseudomonas aeruginosa (strain LESB58).